Here is a 137-residue protein sequence, read N- to C-terminus: Nucleoside diphosphate kinase (137 aa).

Residues Lys-9, Phe-57, Arg-85, Thr-91, Arg-102, and Asn-112 each contribute to the ATP site. Catalysis depends on His-115, which acts as the Pros-phosphohistidine intermediate.

It belongs to the NDK family. In terms of assembly, homotetramer. The cofactor is Mg(2+).

It is found in the cytoplasm. The catalysed reaction is a 2'-deoxyribonucleoside 5'-diphosphate + ATP = a 2'-deoxyribonucleoside 5'-triphosphate + ADP. The enzyme catalyses a ribonucleoside 5'-diphosphate + ATP = a ribonucleoside 5'-triphosphate + ADP. Functionally, major role in the synthesis of nucleoside triphosphates other than ATP. The ATP gamma phosphate is transferred to the NDP beta phosphate via a ping-pong mechanism, using a phosphorylated active-site intermediate. This is Nucleoside diphosphate kinase from Helicobacter hepaticus (strain ATCC 51449 / 3B1).